The primary structure comprises 219 residues: MSIQVFCDFDGTITNNDNIMSIMEKFAPPEAEEVKNRILSQELSIQEGVSQLFQLIPTNLHDEIIQFLIETAEIRNGFHEFIQFVNENNISFYVISGGMDFFVYPLLQGLIPKEQIYCNETDFSNEYITVNWPHPCDRLCQNHCGLCKSSLIRKLSDTNDFHIVIGDSITDLQAAKQADKVFARDFLITKCEENHISYTPFETFHDVQTELKHLLEVKL.

Belongs to the HAD-like hydrolase superfamily. MtnX family.

The enzyme catalyses 2-hydroxy-5-methylsulfanyl-3-oxopent-1-enyl phosphate + H2O = 1,2-dihydroxy-5-(methylsulfanyl)pent-1-en-3-one + phosphate. Its pathway is amino-acid biosynthesis; L-methionine biosynthesis via salvage pathway; L-methionine from S-methyl-5-thio-alpha-D-ribose 1-phosphate: step 4/6. In terms of biological role, dephosphorylates 2-hydroxy-3-keto-5-methylthiopentenyl-1-phosphate (HK-MTPenyl-1-P) yielding 1,2-dihydroxy-3-keto-5-methylthiopentene (DHK-MTPene). The sequence is that of 2-hydroxy-3-keto-5-methylthiopentenyl-1-phosphate phosphatase from Bacillus thuringiensis (strain Al Hakam).